The sequence spans 329 residues: Ubiquitin carboxyl-terminal hydrolase isozyme L5 (329 aa).

Residues 7–225 (EWCLMESDPG…IRFNLMAIVS (219 aa)) form the UCH catalytic domain. K47 is subject to N6-succinyllysine. C88 acts as the Nucleophile in catalysis. N6-acetyllysine is present on K158. Catalysis depends on H164, which acts as the Proton donor. K289 is modified (N6-succinyllysine). A ULD domain is found at 291–319 (NYLPFIMELLKTLAEHQQLIPLVEKAKEK). Residues 313-329 (VEKAKEKQNAKKAQETK) form an interaction with ADRM1 region.

The protein belongs to the peptidase C12 family. As to quaternary structure, component of the 19S (PA700) regulatory complex of the 26S proteasome. Interacts with ADRM1 and NFRKB. Component of the INO80 complex; specifically part of a complex module associated with N-terminus of INO80.

It localises to the cytoplasm. The protein resides in the nucleus. The enzyme catalyses Thiol-dependent hydrolysis of ester, thioester, amide, peptide and isopeptide bonds formed by the C-terminal Gly of ubiquitin (a 76-residue protein attached to proteins as an intracellular targeting signal).. Activated by ADRM1. Inhibited by interaction with NFRKB. Its function is as follows. Protease that specifically cleaves 'Lys-48'-linked polyubiquitin chains. Deubiquitinating enzyme associated with the 19S regulatory subunit of the 26S proteasome. Putative regulatory component of the INO80 complex; however is inactive in the INO80 complex and is activated by a transient interaction of the INO80 complex with the proteasome via ADRM1. The sequence is that of Ubiquitin carboxyl-terminal hydrolase isozyme L5 (Uchl5) from Mus musculus (Mouse).